Reading from the N-terminus, the 461-residue chain is F-box protein At3g62230 (461 aa).

An F-box domain is found at 7–55; sequence VDIISTLSDFLLVLIISNLSFKEALSTSRLSTRWRHICRETRNISFRED.

In terms of assembly, part of a SCF (ASK-cullin-F-box) protein ligase complex. Interacts with ASK4.

It is found in the nucleus. The protein operates within protein modification; protein ubiquitination. Functionally, component of SCF(ASK-cullin-F-box) E3 ubiquitin ligase complexes, which may mediate the ubiquitination and subsequent proteasomal degradation of target proteins. The polypeptide is F-box protein At3g62230 (Arabidopsis thaliana (Mouse-ear cress)).